The sequence spans 327 residues: GTPase Obg (327 aa).

Residues 1–159 form the Obg domain; sequence MKFVDSARIV…LKVDLELKLM (159 aa). Positions 120–145 are disordered; sequence GGDGGRGNPHFTTSTRQAPRYAEPGG. An OBG-type G domain is found at 160–323; that stretch reads ADVGLVGFPN…LRNALWNTIN (164 aa). GTP contacts are provided by residues 166 to 173, 191 to 195, 213 to 216, 280 to 283, and 304 to 306; these read GFPNAGKS, FTTLV, DIPG, TKMD, and SSI. Positions 173 and 193 each coordinate Mg(2+).

It belongs to the TRAFAC class OBG-HflX-like GTPase superfamily. OBG GTPase family. As to quaternary structure, monomer. It depends on Mg(2+) as a cofactor.

Its subcellular location is the cytoplasm. Its function is as follows. An essential GTPase which binds GTP, GDP and possibly (p)ppGpp with moderate affinity, with high nucleotide exchange rates and a fairly low GTP hydrolysis rate. Plays a role in control of the cell cycle, stress response, ribosome biogenesis and in those bacteria that undergo differentiation, in morphogenesis control. The sequence is that of GTPase Obg from Prosthecochloris aestuarii (strain DSM 271 / SK 413).